The sequence spans 347 residues: Hyaluronidase conohyal-ad1 (347 aa).

The N-terminal stretch at 1-18 (MRAVVVVTGLVVVVVTTT) is a signal peptide. Residues 19-33 (LSLQDHDVKSASSPL) constitute a propeptide that is removed on maturation. A disordered region spans residues 27–49 (KSASSPLSSSVDQGSSGDDCDEG). Positions 28–43 (SASSPLSSSVDQGSSG) are enriched in low complexity. The cysteines at positions 67 and 343 are disulfide-linked. The active-site Proton donor is glutamate 150.

Belongs to the glycosyl hydrolase 56 family. Post-translationally, contains 4 disulfide bonds. Is N-linked glycosylated at three positions. In terms of tissue distribution, expressed by the venom duct.

It is found in the secreted. It carries out the reaction Random hydrolysis of (1-&gt;4)-linkages between N-acetyl-beta-D-glucosamine and D-glucuronate residues in hyaluronate.. Functionally, hyaluronidase catalyzes the hydrolysis of hyaluronic acid (HA), an anionic, nonsulfated glycosaminoglycan distributed widely throughout connective, epithelial, and neural tissues. In venom, they are known to enhance diffusion of the venom by degrading the extracellular matrix. The protein is Hyaluronidase conohyal-ad1 of Conus adamsonii (Rhododendron cone).